Reading from the N-terminus, the 356-residue chain is Phosphoribosylformylglycinamidine cyclo-ligase (356 aa).

The protein belongs to the AIR synthase family.

The protein resides in the cytoplasm. The enzyme catalyses 2-formamido-N(1)-(5-O-phospho-beta-D-ribosyl)acetamidine + ATP = 5-amino-1-(5-phospho-beta-D-ribosyl)imidazole + ADP + phosphate + H(+). Its pathway is purine metabolism; IMP biosynthesis via de novo pathway; 5-amino-1-(5-phospho-D-ribosyl)imidazole from N(2)-formyl-N(1)-(5-phospho-D-ribosyl)glycinamide: step 2/2. This chain is Phosphoribosylformylglycinamidine cyclo-ligase, found in Desulfotalea psychrophila (strain LSv54 / DSM 12343).